The following is a 430-amino-acid chain: Adenylosuccinate synthetase (430 aa).

GTP contacts are provided by residues 12-18 (GDEGKGK) and 40-42 (GHT). Catalysis depends on Asp-13, which acts as the Proton acceptor. Residues Asp-13 and Gly-40 each contribute to the Mg(2+) site. Residues 13-16 (DEGK), 38-41 (NAGH), Thr-128, Arg-142, Gln-223, Thr-238, and Arg-302 each bind IMP. The Proton donor role is filled by His-41. Substrate is bound at residue 298–304 (TTTGRPR). Residues Arg-304, 330-332 (SID), and 412-414 (SVG) each bind GTP.

Belongs to the adenylosuccinate synthetase family. In terms of assembly, homodimer. Mg(2+) serves as cofactor.

Its subcellular location is the cytoplasm. The enzyme catalyses IMP + L-aspartate + GTP = N(6)-(1,2-dicarboxyethyl)-AMP + GDP + phosphate + 2 H(+). It functions in the pathway purine metabolism; AMP biosynthesis via de novo pathway; AMP from IMP: step 1/2. Its function is as follows. Plays an important role in the de novo pathway of purine nucleotide biosynthesis. Catalyzes the first committed step in the biosynthesis of AMP from IMP. The chain is Adenylosuccinate synthetase from Bacillus licheniformis (strain ATCC 14580 / DSM 13 / JCM 2505 / CCUG 7422 / NBRC 12200 / NCIMB 9375 / NCTC 10341 / NRRL NRS-1264 / Gibson 46).